The following is a 252-amino-acid chain: MNTLLIIDGLNLVRRIHAAQPDENDINNVQQMTLLACTKMLKTHQPSHVIVVWDGDEESWRKKLYSDYKKGRKPMPEALKIALVGIRNTLSEAGIHSLEAESEADDVIATLATKMVENSGAAIIVSTDKGFSQLVKKNIQIWDHFKQLFLDISAHEKKLAVEQYQFLDFIALAGDSGNKIPGIAGIGPKSAADLLNKFRTLANIYNSLDNLGAKQAQKLAEGREMARISYKLGQLQCHMPLEINLKQFRVKK.

Asp-105 lines the Mg(2+) pocket. In terms of domain architecture, 5'-3' exonuclease spans 162-251 (EQYQFLDFIA…EINLKQFRVK (90 aa)). K(+) contacts are provided by Leu-172, Ala-173, Pro-181, Ile-183, and Ile-186. An interaction with DNA region spans residues 185–190 (GIGPKS).

The protein belongs to the Xni family. It depends on Mg(2+) as a cofactor. Requires K(+) as cofactor.

Has flap endonuclease activity. During DNA replication, flap endonucleases cleave the 5'-overhanging flap structure that is generated by displacement synthesis when DNA polymerase encounters the 5'-end of a downstream Okazaki fragment. The sequence is that of Flap endonuclease Xni from Shewanella denitrificans (strain OS217 / ATCC BAA-1090 / DSM 15013).